A 236-amino-acid polypeptide reads, in one-letter code: Syntaxin-8 (236 aa).

The Cytoplasmic segment spans residues Met1–Gly215. Positions Val42–Ala65 form a coiled coil. The t-SNARE coiled-coil homology domain occupies Gln145 to Val207. Ser160 is subject to Phosphoserine. The chain crosses the membrane as a helical; Anchor for type IV membrane protein span at residues Met216–Val232. Residues Trp233–Asn236 lie on the Vesicular side of the membrane.

The protein belongs to the syntaxin family. Forms a SNARE complex with STX7, VTI1B and VAMP8 which functions in the homotypic fusion of late endosomes. Part of the SNARE core complex containing STX7, VAMP8 and VTI1B. Interacts with VAMP8. Interacts with HECTD3. Interacts with TPC1. Post-translationally, ubiquitinated by HECTD3. As to expression, highly expressed in heart. Also found in brain, kidney, liver, lung, placenta, skeletal muscle, spleen and pancreas.

Its subcellular location is the membrane. Vesicle trafficking protein that functions in the early secretory pathway, possibly by mediating retrograde transport from cis-Golgi membranes to the ER. The polypeptide is Syntaxin-8 (STX8) (Homo sapiens (Human)).